Reading from the N-terminus, the 194-residue chain is Thymidine kinase (194 aa).

ATP contacts are provided by residues 15 to 22 (GPMFSGKS) and 89 to 92 (DEAH). The active-site Proton acceptor is the Glu-90. Zn(2+) is bound by residues Cys-146, Cys-149, Cys-178, and Cys-181.

This sequence belongs to the thymidine kinase family. In terms of assembly, homotetramer.

The protein resides in the cytoplasm. The enzyme catalyses thymidine + ATP = dTMP + ADP + H(+). In Metamycoplasma arthritidis (strain 158L3-1) (Mycoplasma arthritidis), this protein is Thymidine kinase.